The sequence spans 949 residues: RNA polymerase-associated protein RapA (949 aa).

In terms of domain architecture, Helicase ATP-binding spans glutamate 164–asparagine 332. Aspartate 177–threonine 184 is a binding site for ATP. A DEAH box motif is present at residues aspartate 278–histidine 281. In terms of domain architecture, Helicase C-terminal spans arginine 474–histidine 628.

Belongs to the SNF2/RAD54 helicase family. RapA subfamily. In terms of assembly, interacts with the RNAP. Has a higher affinity for the core RNAP than for the holoenzyme. Its ATPase activity is stimulated by binding to RNAP.

Functionally, transcription regulator that activates transcription by stimulating RNA polymerase (RNAP) recycling in case of stress conditions such as supercoiled DNA or high salt concentrations. Probably acts by releasing the RNAP, when it is trapped or immobilized on tightly supercoiled DNA. Does not activate transcription on linear DNA. Probably not involved in DNA repair. This Pseudomonas fluorescens (strain ATCC BAA-477 / NRRL B-23932 / Pf-5) protein is RNA polymerase-associated protein RapA.